A 184-amino-acid chain; its full sequence is Probable RNA 2'-phosphotransferase (184 aa).

It belongs to the KptA/TPT1 family.

In terms of biological role, removes the 2'-phosphate from RNA via an intermediate in which the phosphate is ADP-ribosylated by NAD followed by a presumed transesterification to release the RNA and generate ADP-ribose 1''-2''-cyclic phosphate (APPR&gt;P). May function as an ADP-ribosylase. This is Probable RNA 2'-phosphotransferase from Escherichia coli O9:H4 (strain HS).